A 146-amino-acid polypeptide reads, in one-letter code: UPF0260 protein SO_2573 (146 aa).

It belongs to the UPF0260 family.

This is UPF0260 protein SO_2573 from Shewanella oneidensis (strain ATCC 700550 / JCM 31522 / CIP 106686 / LMG 19005 / NCIMB 14063 / MR-1).